The primary structure comprises 515 residues: 2-isopropylmalate synthase (515 aa).

Residues 5–267 enclose the Pyruvate carboxyltransferase domain; sequence VIIFDTTLRD…STGIKHEEIH (263 aa). Residues Asp-14, His-202, His-204, and Asn-238 each coordinate Mn(2+). Residues 392–515 are regulatory domain; the sequence is KLNYLSVQSG…EMKQKKIATV (124 aa).

This sequence belongs to the alpha-IPM synthase/homocitrate synthase family. LeuA type 1 subfamily. As to quaternary structure, homodimer. Requires Mn(2+) as cofactor.

Its subcellular location is the cytoplasm. It carries out the reaction 3-methyl-2-oxobutanoate + acetyl-CoA + H2O = (2S)-2-isopropylmalate + CoA + H(+). It participates in amino-acid biosynthesis; L-leucine biosynthesis; L-leucine from 3-methyl-2-oxobutanoate: step 1/4. In terms of biological role, catalyzes the condensation of the acetyl group of acetyl-CoA with 3-methyl-2-oxobutanoate (2-ketoisovalerate) to form 3-carboxy-3-hydroxy-4-methylpentanoate (2-isopropylmalate). This Vibrio parahaemolyticus serotype O3:K6 (strain RIMD 2210633) protein is 2-isopropylmalate synthase.